A 568-amino-acid polypeptide reads, in one-letter code: Phosphoprotein (568 aa).

Disordered regions lie at residues 1-23 (MDQDAFILKEDSEVEREAPGGRE) and 38-320 (SEPT…GIGE). The segment covering 7–20 (ILKEDSEVEREAPG) has biased composition (basic and acidic residues). The tract at residues 33–41 (DAVLSSEPT) is N0 binding. The segment covering 50 to 59 (LHNTINTPQG) has biased composition (polar residues). Ser-68 carries the post-translational modification Phosphoserine; by host. Residues 83-101 (RSGEESRVSGRTSKPEAEA) show a composition bias toward basic and acidic residues. Phosphoserine; by host is present on Ser-125. Positions 150–168 (GIEDENREMAAHPDKRGED) are enriched in basic and acidic residues. Residues 191–206 (ASNNGRSMEPGSSHSA) show a composition bias toward polar residues. Phosphoserine; by host occurs at positions 192, 249, 257, and 260. Multimerization stretches follow at residues 344 to 411 (FESS…KRFS) and 362 to 432 (ANYA…HIIT). The interval 345 to 412 (ESSRDASYVF…FRDIYKRFSE (68 aa)) is bipartite nucleocapsid binding domain 1. Residues 364 to 429 (YAEMTFNVCG…LLMSNLSTLH (66 aa)) adopt a coiled-coil conformation. L protein binding stretches follow at residues 412–445 (EYQKEQNSLLMSNLSTLHIITDRGGKTDNTDSLT) and 413–445 (YQKEQNSLLMSNLSTLHIITDRGGKTDNTDSLT). Residues Ser-447 and Ser-449 each carry the phosphoserine; by host modification. The tract at residues 479–568 (DLIREDEFRD…VEEDIESLTN (90 aa)) is bipartite nucleocapsid binding domain 2. Residues 479-568 (DLIREDEFRD…VEEDIESLTN (90 aa)) form an interaction with the nucleocapsid (N-RNA) region. Residues 495–516 (YQERDTEPRASNASRLLPSKEK) form a disordered region. The tract at residues 547–566 (KTDQEVKAVMELVEEDIESL) is formation of N-RNA complex involved in transcription and replication.

Belongs to the respirovirus P protein family. Homotetramer. Interacts (via multimerization domain) with polymerase L; this interaction forms the polymerase complex. Interacts (via N-terminus) with N0; this interaction allows P to chaperon N0 before encapsidation and form the N-P complex. Interacts (via C-terminus) with N-RNA template; this interaction positions the polymerase on the template. In terms of processing, phosphorylated by PKC/PRKCZ, and other unknown kinases. Phosphorylation is necessary for viral transcription and replication. The N-terminus contains the majority of phosphorylated sites. Ser-249 is the major site of phosphorylation, but is not necessary for most functions.

It is found in the host cytoplasm. Essential cofactor of the RNA polymerase L that plays a central role in the transcription and replication by forming the polymerase complex with RNA polymerase L and recruiting L to the genomic N-RNA template for RNA synthesis. Also plays a central role in the encapsidation of nascent RNA chains by forming the encapsidation complex with the nucleocapsid protein N (N-P complex). Acts as a chaperone for newly synthesized free N protein, so-called N0, allowing encapsidation of nascent RNA chains during replication. The nucleoprotein protein N prevents excessive phosphorylation of P, which leads to down-regulation of viral transcription/ replication. Participates, together with N, in the formation of viral factories (viroplasms), which are large inclusions in the host cytoplasm where replication takes place. Recruits host PI4KB and remodel the host endoplasmic reticulum membrane to form viral replication factories. The polypeptide is Phosphoprotein (P/V/C) (Sendai virus (strain Fushimi) (SeV)).